We begin with the raw amino-acid sequence, 200 residues long: Holliday junction branch migration complex subunit RuvA (200 aa).

Residues 1-64 are domain I; sequence MIAHLTGLVG…EDAFLLYGFA (64 aa). Residues 65 to 143 form a domain II region; that stretch reads EAAERDWFRL…RMPAGPGVTI (79 aa). The flexible linker stretch occupies residues 144–147; sequence AAPP. The segment at 148-200 is domain III; that stretch reads ASGGVEADALLALAGLGFRRAEAQPVVGRILARLDGKADLDVVIRESLRELAR.

Belongs to the RuvA family. As to quaternary structure, homotetramer. Forms an RuvA(8)-RuvB(12)-Holliday junction (HJ) complex. HJ DNA is sandwiched between 2 RuvA tetramers; dsDNA enters through RuvA and exits via RuvB. An RuvB hexamer assembles on each DNA strand where it exits the tetramer. Each RuvB hexamer is contacted by two RuvA subunits (via domain III) on 2 adjacent RuvB subunits; this complex drives branch migration. In the full resolvosome a probable DNA-RuvA(4)-RuvB(12)-RuvC(2) complex forms which resolves the HJ.

Its subcellular location is the cytoplasm. In terms of biological role, the RuvA-RuvB-RuvC complex processes Holliday junction (HJ) DNA during genetic recombination and DNA repair, while the RuvA-RuvB complex plays an important role in the rescue of blocked DNA replication forks via replication fork reversal (RFR). RuvA specifically binds to HJ cruciform DNA, conferring on it an open structure. The RuvB hexamer acts as an ATP-dependent pump, pulling dsDNA into and through the RuvAB complex. HJ branch migration allows RuvC to scan DNA until it finds its consensus sequence, where it cleaves and resolves the cruciform DNA. The chain is Holliday junction branch migration complex subunit RuvA from Gluconacetobacter diazotrophicus (strain ATCC 49037 / DSM 5601 / CCUG 37298 / CIP 103539 / LMG 7603 / PAl5).